The following is a 227-amino-acid chain: MLIEIPEVLTKEQVAQCRQLMDAAEWVDGNVTSGSQSALAKNNMQLPEGSPVARQVGDLIQDALGMSPLFISAALPLKVFPPLFNRYEGGQAFGTHVDNAIRQLRGTNFRIRSDLSATLFFSEPEDYDGGVLTIEDTFGIQEVKLPAGHMVLYPSSSLHHVTPVTRGVRVSSFFWMQSMIRDDAQRTLLFQLDGSIQAIGAERGAGDPEVIRLTGVYHNLLRMWADS.

The 101-residue stretch at 78–178 (KVFPPLFNRY…RVSSFFWMQS (101 aa)) folds into the Fe2OG dioxygenase domain. Fe cation contacts are provided by histidine 96, aspartate 98, and histidine 159. Arginine 169 is a 2-oxoglutarate binding site.

Requires Fe(2+) as cofactor. L-ascorbate is required as a cofactor.

This is PKHD-type hydroxylase Mfla_2317 from Methylobacillus flagellatus (strain ATCC 51484 / DSM 6875 / VKM B-1610 / KT).